Here is a 141-residue protein sequence, read N- to C-terminus: Hemoglobin subunit alpha-2 (141 aa).

Residues 1-141 enclose the Globin domain; it reads VLSPADKNNV…VSTVLTSKYR (141 aa). Residue His-58 participates in O2 binding. His-87 provides a ligand contact to heme b.

Belongs to the globin family. As to quaternary structure, heterotetramer of two alpha chains and two beta chains. Red blood cells.

Functionally, involved in oxygen transport from the lung to the various peripheral tissues. The polypeptide is Hemoglobin subunit alpha-2 (Varecia variegata (Black-and-white ruffed lemur)).